We begin with the raw amino-acid sequence, 201 residues long: Dephospho-CoA kinase (201 aa).

Residues Ile-3–Ile-201 enclose the DPCK domain. Gly-11–Leu-16 is an ATP binding site.

This sequence belongs to the CoaE family.

It localises to the cytoplasm. The catalysed reaction is 3'-dephospho-CoA + ATP = ADP + CoA + H(+). It participates in cofactor biosynthesis; coenzyme A biosynthesis; CoA from (R)-pantothenate: step 5/5. Functionally, catalyzes the phosphorylation of the 3'-hydroxyl group of dephosphocoenzyme A to form coenzyme A. The protein is Dephospho-CoA kinase of Ehrlichia ruminantium (strain Welgevonden).